A 321-amino-acid chain; its full sequence is tRNA pseudouridine synthase B (321 aa).

Asp47 acts as the Nucleophile in catalysis.

It belongs to the pseudouridine synthase TruB family. Type 1 subfamily.

It carries out the reaction uridine(55) in tRNA = pseudouridine(55) in tRNA. Functionally, responsible for synthesis of pseudouridine from uracil-55 in the psi GC loop of transfer RNAs. This chain is tRNA pseudouridine synthase B, found in Shewanella baltica (strain OS223).